The sequence spans 235 residues: UPF0173 metal-dependent hydrolase Oant_3663 (235 aa).

It belongs to the UPF0173 family.

The chain is UPF0173 metal-dependent hydrolase Oant_3663 from Brucella anthropi (strain ATCC 49188 / DSM 6882 / CCUG 24695 / JCM 21032 / LMG 3331 / NBRC 15819 / NCTC 12168 / Alc 37) (Ochrobactrum anthropi).